Here is a 311-residue protein sequence, read N- to C-terminus: Cytosolic Fe-S cluster assembly factor Nubp1 homolog (311 aa).

Residues 1–21 are disordered; it reads MQAPPPEHCPGVESEDAGKGS. Positions 9, 23, 26, and 32 each coordinate [4Fe-4S] cluster. Residue 63–70 coordinates ATP; that stretch reads GKGGVGKS. Residues C240 and C243 each coordinate [4Fe-4S] cluster.

This sequence belongs to the Mrp/NBP35 ATP-binding proteins family. NUBP1/NBP35 subfamily. As to quaternary structure, heterotetramer of 2 Nubp1 and 2 Nubp2 chains. The cofactor is [4Fe-4S] cluster.

The protein resides in the cytoplasm. In terms of biological role, component of the cytosolic iron-sulfur (Fe/S) protein assembly (CIA) machinery. Required for maturation of extramitochondrial Fe-S proteins. The Nubp1-Nubp2 heterotetramer forms a Fe-S scaffold complex, mediating the de novo assembly of an Fe-S cluster and its transfer to target apoproteins. This is Cytosolic Fe-S cluster assembly factor Nubp1 homolog from Drosophila sechellia (Fruit fly).